A 120-amino-acid chain; its full sequence is Putative ankyrin repeat protein RBE_1215 (120 aa).

ANK repeat units lie at residues Asp22–Ile52 and Phe59–Val88.

This Rickettsia bellii (strain RML369-C) protein is Putative ankyrin repeat protein RBE_1215.